The primary structure comprises 421 residues: Tyrosine--tRNA ligase (421 aa).

Tyr42 serves as a coordination point for L-tyrosine. A 'HIGH' region motif is present at residues 47 to 56 (CTAPSLHVGS). L-tyrosine is bound by residues Tyr179 and Gln183. A 'KMSKS' region motif is present at residues 239 to 243 (KMGKT). Position 242 (Lys242) interacts with ATP. The region spanning 354–419 (LGILAAFAKA…RKKHVLLRLA (66 aa)) is the S4 RNA-binding domain.

This sequence belongs to the class-I aminoacyl-tRNA synthetase family. TyrS type 1 subfamily. In terms of assembly, homodimer.

The protein resides in the cytoplasm. It catalyses the reaction tRNA(Tyr) + L-tyrosine + ATP = L-tyrosyl-tRNA(Tyr) + AMP + diphosphate + H(+). Catalyzes the attachment of tyrosine to tRNA(Tyr) in a two-step reaction: tyrosine is first activated by ATP to form Tyr-AMP and then transferred to the acceptor end of tRNA(Tyr). The chain is Tyrosine--tRNA ligase from Beijerinckia indica subsp. indica (strain ATCC 9039 / DSM 1715 / NCIMB 8712).